We begin with the raw amino-acid sequence, 236 residues long: Ribonuclease 3 (236 aa).

An RNase III domain is found at 13-138 (TEKVFKISGY…LIGAIYVDGG (126 aa)). Mg(2+) is bound at residue Glu51. The active site involves Asp55. Mg(2+) contacts are provided by Asn124 and Glu127. Glu127 is a catalytic residue. The region spanning 164-232 (DAKTALQEWA…AKLMLEKVTK (69 aa)) is the DRBM domain.

It belongs to the ribonuclease III family. In terms of assembly, homodimer. The cofactor is Mg(2+).

Its subcellular location is the cytoplasm. It catalyses the reaction Endonucleolytic cleavage to 5'-phosphomonoester.. Digests double-stranded RNA. Involved in the processing of primary rRNA transcript to yield the immediate precursors to the large and small rRNAs (23S and 16S). Processes some mRNAs, and tRNAs when they are encoded in the rRNA operon. Processes pre-crRNA and tracrRNA of type II CRISPR loci if present in the organism. The sequence is that of Ribonuclease 3 from Anaplasma phagocytophilum (strain HZ).